A 550-amino-acid chain; its full sequence is Carboxypeptidase Y homolog A (550 aa).

Residues Met-1–Ala-17 form the signal peptide. The propeptide occupies Pro-18–Lys-131. 5 disulfides stabilise this stretch: Cys-186–Cys-426, Cys-320–Cys-334, Cys-344–Cys-367, Cys-351–Cys-360, and Cys-389–Cys-396. The N-linked (GlcNAc...) asparagine glycan is linked to Asn-217. Residue Ser-273 is part of the active site. Asp-465 is a catalytic residue. N-linked (GlcNAc...) asparagine glycosylation occurs at Asn-516. His-527 is an active-site residue.

This sequence belongs to the peptidase S10 family.

Its subcellular location is the vacuole. The catalysed reaction is Release of a C-terminal amino acid with broad specificity.. Functionally, vacuolar carboxypeptidase involved in degradation of small peptides. Digests preferentially peptides containing an aliphatic or hydrophobic residue in P1' position, as well as methionine, leucine or phenylalanine in P1 position of ester substrate. This is Carboxypeptidase Y homolog A (cpyA) from Penicillium rubens (strain ATCC 28089 / DSM 1075 / NRRL 1951 / Wisconsin 54-1255) (Penicillium chrysogenum).